A 143-amino-acid polypeptide reads, in one-letter code: Transcriptional regulator MraZ (143 aa).

2 SpoVT-AbrB domains span residues 5 to 47 (EYEH…PMPV) and 76 to 119 (ASDL…SAER).

Belongs to the MraZ family. Forms oligomers.

The protein localises to the cytoplasm. The protein resides in the nucleoid. This chain is Transcriptional regulator MraZ, found in Herpetosiphon aurantiacus (strain ATCC 23779 / DSM 785 / 114-95).